The following is a 385-amino-acid chain: 8-amino-7-oxononanoate synthase (385 aa).

Arg-21 contributes to the substrate binding site. 108 to 109 provides a ligand contact to pyridoxal 5'-phosphate; sequence GF. Residue His-133 participates in substrate binding. Ser-179, His-207, and Thr-233 together coordinate pyridoxal 5'-phosphate. Position 236 is an N6-(pyridoxal phosphate)lysine (Lys-236). Thr-352 contacts substrate.

This sequence belongs to the class-II pyridoxal-phosphate-dependent aminotransferase family. BioF subfamily. In terms of assembly, homodimer. Pyridoxal 5'-phosphate serves as cofactor.

The enzyme catalyses 6-carboxyhexanoyl-[ACP] + L-alanine + H(+) = (8S)-8-amino-7-oxononanoate + holo-[ACP] + CO2. It participates in cofactor biosynthesis; biotin biosynthesis. Catalyzes the decarboxylative condensation of pimeloyl-[acyl-carrier protein] and L-alanine to produce 8-amino-7-oxononanoate (AON), [acyl-carrier protein], and carbon dioxide. This chain is 8-amino-7-oxononanoate synthase, found in Salmonella paratyphi C (strain RKS4594).